A 381-amino-acid chain; its full sequence is Zinc finger CCCH domain-containing protein 61 (381 aa).

Residues 1 to 39 (MDVEHHKSGHISRPTVDIPPRKLLSSAKSPSSVSSPLRD) form a disordered region. The segment covering 21-37 (RKLLSSAKSPSSVSSPL) has biased composition (low complexity). 2 consecutive C3H1-type zinc fingers follow at residues 101-128 (YTGE…HGVF) and 137-159 (YRTE…AHSP).

Interacts with MARD1/FLZ9 and RD21A via its CCCH zing finger domains.

Its subcellular location is the cytoplasm. It localises to the stress granule. It is found in the P-body. This Arabidopsis thaliana (Mouse-ear cress) protein is Zinc finger CCCH domain-containing protein 61.